The following is a 236-amino-acid chain: UPF0173 metal-dependent hydrolase DSY1309 (236 aa).

Belongs to the UPF0173 family.

This Desulfitobacterium hafniense (strain Y51) protein is UPF0173 metal-dependent hydrolase DSY1309.